The chain runs to 382 residues: Leucine carboxyl methyltransferase 1 (382 aa).

Over residues 1 to 11 (MSAPQIPNLNT) the composition is skewed to polar residues. The disordered stretch occupies residues 1–45 (MSAPQIPNLNTLRRGGGRGRFRARGGPDSSSSSGNKDRVVQGTDN). S-adenosyl-L-methionine contacts are provided by residues R88, G121, D146, 193 to 194 (DL), and E230.

It belongs to the methyltransferase superfamily. LCMT family.

The enzyme catalyses [phosphatase 2A protein]-C-terminal L-leucine + S-adenosyl-L-methionine = [phosphatase 2A protein]-C-terminal L-leucine methyl ester + S-adenosyl-L-homocysteine. Methylates the carboxyl group of the C-terminal leucine residue of protein phosphatase 2A catalytic subunits to form alpha-leucine ester residues. This Emericella nidulans (strain FGSC A4 / ATCC 38163 / CBS 112.46 / NRRL 194 / M139) (Aspergillus nidulans) protein is Leucine carboxyl methyltransferase 1 (ppm1).